We begin with the raw amino-acid sequence, 231 residues long: Large ribosomal subunit protein uL1 (231 aa).

The protein belongs to the universal ribosomal protein uL1 family. As to quaternary structure, part of the 50S ribosomal subunit.

Its function is as follows. Binds directly to 23S rRNA. The L1 stalk is quite mobile in the ribosome, and is involved in E site tRNA release. In terms of biological role, protein L1 is also a translational repressor protein, it controls the translation of the L11 operon by binding to its mRNA. In Cellvibrio japonicus (strain Ueda107) (Pseudomonas fluorescens subsp. cellulosa), this protein is Large ribosomal subunit protein uL1.